Consider the following 474-residue polypeptide: UDP-N-acetylmuramate--L-alanine ligase (474 aa).

An ATP-binding site is contributed by 123–129 (GTHGKTT).

The protein belongs to the MurCDEF family.

The protein localises to the cytoplasm. The enzyme catalyses UDP-N-acetyl-alpha-D-muramate + L-alanine + ATP = UDP-N-acetyl-alpha-D-muramoyl-L-alanine + ADP + phosphate + H(+). Its pathway is cell wall biogenesis; peptidoglycan biosynthesis. Its function is as follows. Cell wall formation. This is UDP-N-acetylmuramate--L-alanine ligase from Alcanivorax borkumensis (strain ATCC 700651 / DSM 11573 / NCIMB 13689 / SK2).